A 183-amino-acid chain; its full sequence is Helofensin-1 (183 aa).

Residues 1 to 26 (MQMDWLFIAVVSAIGLLSSGVPGTQG) form the signal peptide. The stretch at 27-64 (AYTTEQCRALNGTCRFYACFPKNVVIGKCDWLGWGCCA) is one C(6)C(4)C(9)C(6)CC 1; approximate repeat. One copy of the C(6)C(4)C(9)C(6)CC 2; approximate repeat lies at 65–101 (RTPLERCTAKKGTCTASGCTETDTDHGPCDGGAQCCQ). Residues 102–139 (RDPVKYCKFHGNVCGRGKCPMDHIPIGEQCMPGYPCCK) form a C(6)C(4)C(9)C(6)CC 3; approximate repeat. The stretch at 140-177 (RDGPAYCKSKGGKCLRRCSQIVPTDIIGVCADGVPCCK) is one C(6)C(4)C(9)C(6)CC 4; approximate repeat.

Belongs to the beta-defensin family. Helofensin subfamily. In terms of tissue distribution, expressed by the mandibular venom gland.

The protein resides in the secreted. In terms of biological role, lethal toxin which possesses an inhibitory effect on direct electrical stimulation of the isolated hemi-diaphragm of mice. Neither hemorrhagic nor hemolytic activities are detected. Phospholipase A2 activity, proteolytic activity and arginine esterolytic activity are absent. In Heloderma suspectum cinctum (Banded Gila monster), this protein is Helofensin-1.